The primary structure comprises 118 residues: MTRIKRGSIARRRRKKMCFFASSFRGAHSRLTRTITQQGIRALVSADRDRDRQKRDFRRLWITRLNAVIREMGIYYNYSKLIRDLYNNQLLLNRKILSQIAISNSKCLYMISNGILQI.

It belongs to the bacterial ribosomal protein bL20 family.

The protein resides in the plastid. In terms of biological role, binds directly to 23S ribosomal RNA and is necessary for the in vitro assembly process of the 50S ribosomal subunit. It is not involved in the protein synthesizing functions of that subunit. The chain is Large ribosomal subunit protein bL20c (rpl20) from Cuscuta reflexa (Southern Asian dodder).